Consider the following 127-residue polypeptide: Glycine cleavage system H protein (127 aa).

Residues 22-104 form the Lipoyl-binding domain; that stretch reads KVRIGITDFA…YEKAWMIVVE (83 aa). Lysine 63 carries the post-translational modification N6-lipoyllysine.

The protein belongs to the GcvH family. The glycine cleavage system is composed of four proteins: P, T, L and H. (R)-lipoate serves as cofactor.

Functionally, the glycine cleavage system catalyzes the degradation of glycine. The H protein shuttles the methylamine group of glycine from the P protein to the T protein. Its function is as follows. Is also involved in protein lipoylation via its role as an octanoyl/lipoyl carrier protein intermediate. The chain is Glycine cleavage system H protein from Geobacillus sp. (strain WCH70).